The primary structure comprises 411 residues: Lysosome-associated membrane glycoprotein 3 (411 aa).

The N-terminal stretch at 1 to 21 (MPGQISAVAVLFLSLTVILHG) is a signal peptide. Residues 22 to 376 (YQIREKEFPK…NVNECLSDYT (355 aa)) lie on the Lumenal side of the membrane. Positions 172–192 (HKSTTNQRPTLSTNVLGTSTP) are enriched in polar residues. The interval 172-204 (HKSTTNQRPTLSTNVLGTSTPTHKDRSTTSPVP) is disordered. Asn-227 carries an N-linked (GlcNAc...) asparagine glycan. 2 cysteine pairs are disulfide-bonded: Cys-232–Cys-269 and Cys-334–Cys-371. A helical membrane pass occupies residues 377–397 (VVLPMVAIIVVVICVVGLSVY). Residues 398–411 (KIRQRHQSSAYQRI) lie on the Cytoplasmic side of the membrane.

The protein belongs to the LAMP family. As to quaternary structure, monomer. Interacts with FURIN.

Its subcellular location is the cell surface. The protein localises to the lysosome membrane. The protein resides in the cytoplasmic vesicle membrane. It is found in the early endosome membrane. Its function is as follows. Lysosomal membrane glycoprotein which plays a role in the unfolded protein response (UPR) that contributes to protein degradation and cell survival during proteasomal dysfunction. Plays a role in the process of fusion of the lysosome with the autophagosome, thereby modulating the autophagic process. Promotes hepatocellular lipogenesis through activation of the PI3K/Akt pathway. May also play a role in dendritic cell function and in adaptive immunity. The chain is Lysosome-associated membrane glycoprotein 3 (Lamp3) from Mus musculus (Mouse).